Here is a 419-residue protein sequence, read N- to C-terminus: Argininosuccinate synthase (419 aa).

9-17 is an ATP binding site; it reads AYSGGLDTS. Position 87 (tyrosine 87) interacts with L-citrulline. Glycine 117 contacts ATP. 3 residues coordinate L-aspartate: threonine 119, asparagine 123, and aspartate 124. Asparagine 123 is a binding site for L-citrulline. L-citrulline contacts are provided by arginine 127, serine 175, serine 184, glutamate 260, and tyrosine 272.

This sequence belongs to the argininosuccinate synthase family. Type 1 subfamily. In terms of assembly, homotetramer.

Its subcellular location is the cytoplasm. The enzyme catalyses L-citrulline + L-aspartate + ATP = 2-(N(omega)-L-arginino)succinate + AMP + diphosphate + H(+). Its pathway is amino-acid biosynthesis; L-arginine biosynthesis; L-arginine from L-ornithine and carbamoyl phosphate: step 2/3. This is Argininosuccinate synthase from Brevibacillus brevis (strain 47 / JCM 6285 / NBRC 100599).